Consider the following 642-residue polypeptide: Influenza virus NS1A-binding protein homolog (642 aa).

One can recognise a BTB domain in the interval 32 to 99 (CDVRLQVCGH…AYTAQLKADK (68 aa)). The region spanning 134–233 (CISYRNFASC…YYSADHKLLD (100 aa)) is the BACK domain. Phosphoserine is present on residues S246, S277, S322, S336, and S338. The tract at residues 257–281 (KPPRENGHKQISGSSTGCLSSPNAS) is disordered. A compositionally biased stretch (polar residues) spans 265 to 281 (KQISGSSTGCLSSPNAS). Kelch repeat units follow at residues 369-415 (KLIA…VLMG), 416-463 (QLYV…ALNG), 465-512 (LYIV…ELGG), 513-559 (YLYI…VLDG), 561-606 (LFVG…TVGN), and 608-642 (IYAVGGFDGNEFLNTVEVYNPQSNEWSPYTKIFQF).

The protein belongs to the BTB-kelch protein family. As to quaternary structure, homodimer; through the BTB domain. Interacts with AHR/Aryl hydrocarbon receptor. Interacts (via BACK domain) with pre-mRNA-binding protein HNRNPK; the interaction is direct. Interacts (via BACK domain) with splicing factor PTBP1; the interaction is direct. Interacts (via Kelch repeats) with RNA polymerase POLR2A (via C-terminal domain). Interacts (via BACK domain) with splicing factor SNRPA; the interaction is indirect. Interacts (via Kelch repeats) with splicing factor SART1. Interacts (via BACK domain) with ALYREF; the interaction is indirect and likely plays a role in mRNA nuclear export. Interacts (via Kelch repeats) with KLHL20 (via Kelch repeats); this interaction blocks the assembly of Cul3-KLHL20 complex. As to expression, ubiquitous expression. In the heart, the highest expression is detected in the ventricles and the lowest in the atria. Expressed in dendrites and spines in neurons.

The protein localises to the cytoplasm. The protein resides in the cytoskeleton. It is found in the nucleus. Involved in many cell functions, including pre-mRNA splicing, the aryl hydrocarbon receptor (AHR) pathway, F-actin organization and protein ubiquitination. Plays a role in the dynamic organization of the actin skeleton as a stabilizer of actin filaments by association with F-actin through Kelch repeats. Protects cells from cell death induced by actin destabilization. Functions as a modifier of the AHR/Aryl hydrocarbon receptor pathway increasing the concentration of AHR available to activate transcription. In addition, functions as a negative regulator of BCR(KLHL20) E3 ubiquitin ligase complex to prevent ubiquitin-mediated proteolysis of PML and DAPK1, two tumor suppressors. Inhibits pre-mRNA splicing (in vitro). May play a role in mRNA nuclear export. In terms of biological role, may play a role in cell cycle progression in the nucleus. In Mus musculus (Mouse), this protein is Influenza virus NS1A-binding protein homolog.